The following is a 509-amino-acid chain: Cytochrome P450 6A1 (509 aa).

Cysteine 449 serves as a coordination point for heme.

The protein belongs to the cytochrome P450 family. Requires heme as cofactor.

The protein resides in the endoplasmic reticulum membrane. The protein localises to the microsome membrane. It catalyses the reaction an organic molecule + reduced [NADPH--hemoprotein reductase] + O2 = an alcohol + oxidized [NADPH--hemoprotein reductase] + H2O + H(+). Involved in the metabolism of insect hormones and in the breakdown of synthetic insecticides. The polypeptide is Cytochrome P450 6A1 (CYP6A1) (Musca domestica (House fly)).